The following is a 139-amino-acid chain: Protein archease (139 aa).

Residues Asp12, Asp138, and Ile139 each contribute to the Ca(2+) site.

It belongs to the archease family.

Activates the tRNA-splicing ligase complex by facilitating the enzymatic turnover of catalytic subunit RtcB. Acts by promoting the guanylylation of RtcB, a key intermediate step in tRNA ligation. Can also alter the NTP specificity of RtcB such that ATP, dGTP or ITP is used efficiently. In Saccharolobus solfataricus (strain ATCC 35092 / DSM 1617 / JCM 11322 / P2) (Sulfolobus solfataricus), this protein is Protein archease.